The primary structure comprises 257 residues: Insulin-induced gene 1 protein (257 aa).

Topologically, residues 1-64 are cytoplasmic; the sequence is MPRLHDHVWS…ARPGSWHHDL (64 aa). The interval 32-54 is disordered; the sequence is CPQGSGAPEPAPRSPRAGTAGCG. A helical transmembrane segment spans residues 65–87; that stretch reads VQRSLVLFSFGVVLALVLNLLQI. Residues 88–106 are Extracellular-facing; that stretch reads QRNVTLFPDEVIATIFSSA. The helical transmembrane segment at 107 to 124 threads the bilayer; it reads WWVPPCCGTAAAVVGLLY. The Cytoplasmic portion of the chain corresponds to 125–139; it reads PCIDSHLGEPHKFKR. Glycyl lysine isopeptide (Lys-Gly) (interchain with G-Cter in ubiquitin) cross-links involve residues Lys136 and Lys138. Residues 140–162 traverse the membrane as a helical segment; it reads EWASVMRCIAVFVGINHASAKLD. Topologically, residues 163 to 165 are extracellular; the sequence is FAN. A helical membrane pass occupies residues 166-184; it reads NVQLSLTLAALSLGLWWTF. Residues 185–189 lie on the Cytoplasmic side of the membrane; it reads DRSRS. Ser187 carries the post-translational modification Phosphoserine. Residues 190–211 form a helical membrane-spanning segment; that stretch reads GLGLGITIAFLATLITQFLVYN. Over 212 to 225 the chain is Extracellular; the sequence is GVYQYTSPDFLYIR. Residues 226–243 traverse the membrane as a helical segment; sequence SWLPCIFFSGGVTVGNIG. At 244-257 the chain is on the cytoplasmic side; sequence RQLAMGVPEKPHSD. The KxHxx signature appears at 251–257; sequence PEKPHSD.

The protein belongs to the INSIG family. In terms of assembly, interacts with SCAP; interaction is direct and only takes place in the presence of sterols; it prevents interaction between SCAP and the coat protein complex II (COPII). Associates with the SCAP-SREBP complex (composed of SCAP and SREBF1/SREBP1 or SREBF2/SREBP2); association is mediated via its interaction with SCAP and only takes place in the presence of sterols. Interaction with SCAP is mutually exclusive with PAQR3. Interacts with HMGCR (via its SSD); the interaction, accelerated by sterols, leads to the recruitment of HMGCR to AMFR/gp78 for its ubiquitination by the sterol-mediated ERAD pathway. Interacts with AMFR/gp78 (via its membrane domain); the interaction recruits HMCR at the ER membrane for its ubiquitination and degradation by the sterol-mediated ERAD pathway. Interacts with SOAT2/ACAT2; leading to promote recruitment of AMFR/gp78 and subsequent ubiquitination of SOAT2/ACAT2. Interacts with RNF139. Interacts with RNF145. Post-translationally, phosphorylation at Ser-187 by PCK1 reduces binding to oxysterol, disrupting the interaction between INSIG1 and SCAP, thereby promoting nuclear translocation of SREBP proteins (SREBF1/SREBP1 or SREBF2/SREBP2) and subsequent transcription of downstream lipogenesis-related genes. Ubiquitinated by AMFR/gp78 in response to sterol deprivation, leading to its degradation: when the SCAP-SREBP complex becomes dissociated from INSIG1, INSIG1 is then ubiquitinated and degraded in proteasomes. Although ubiquitination is required for rapid INSIG1 degradation, it is not required for release of the SCAP-SREBP complex. Ubiquitinated by RNF139.

It localises to the endoplasmic reticulum membrane. In terms of biological role, oxysterol-binding protein that mediates feedback control of cholesterol synthesis by controlling both endoplasmic reticulum to Golgi transport of SCAP and degradation of HMGCR. Acts as a negative regulator of cholesterol biosynthesis by mediating the retention of the SCAP-SREBP complex in the endoplasmic reticulum, thereby blocking the processing of sterol regulatory element-binding proteins (SREBPs) SREBF1/SREBP1 and SREBF2/SREBP2. Binds oxysterol, including 25-hydroxycholesterol, regulating interaction with SCAP and retention of the SCAP-SREBP complex in the endoplasmic reticulum. In presence of oxysterol, interacts with SCAP, retaining the SCAP-SREBP complex in the endoplasmic reticulum, thereby preventing SCAP from escorting SREBF1/SREBP1 and SREBF2/SREBP2 to the Golgi. Sterol deprivation or phosphorylation by PCK1 reduce oxysterol-binding, disrupting the interaction between INSIG1 and SCAP, thereby promoting Golgi transport of the SCAP-SREBP complex, followed by processing and nuclear translocation of SREBF1/SREBP1 and SREBF2/SREBP2. Also regulates cholesterol synthesis by regulating degradation of HMGCR: initiates the sterol-mediated ubiquitin-mediated endoplasmic reticulum-associated degradation (ERAD) of HMGCR via recruitment of the reductase to the ubiquitin ligases AMFR/gp78 and/or RNF139. Also regulates degradation of SOAT2/ACAT2 when the lipid levels are low: initiates the ubiquitin-mediated degradation of SOAT2/ACAT2 via recruitment of the ubiquitin ligases AMFR/gp78. In Cricetulus griseus (Chinese hamster), this protein is Insulin-induced gene 1 protein.